Here is a 79-residue protein sequence, read N- to C-terminus: Small ribosomal subunit protein uS17 (79 aa).

The protein belongs to the universal ribosomal protein uS17 family. In terms of assembly, part of the 30S ribosomal subunit.

In terms of biological role, one of the primary rRNA binding proteins, it binds specifically to the 5'-end of 16S ribosomal RNA. The chain is Small ribosomal subunit protein uS17 from Rhizobium rhizogenes (strain K84 / ATCC BAA-868) (Agrobacterium radiobacter).